Reading from the N-terminus, the 265-residue chain is ATP synthase subunit a (265 aa).

Transmembrane regions (helical) follow at residues 26–46, 88–108, 132–152, 168–188, 195–217, and 231–251; these read VHLD…FFFY, IGSL…IDLI, DISA…FYTI, PFNH…TLLA, FRLF…MYMA, and LIWA…FMML.

The protein belongs to the ATPase A chain family. As to quaternary structure, F-type ATPases have 2 components, CF(1) - the catalytic core - and CF(0) - the membrane proton channel. CF(1) has five subunits: alpha(3), beta(3), gamma(1), delta(1), epsilon(1). CF(0) has three main subunits: a(1), b(2) and c(9-12). The alpha and beta chains form an alternating ring which encloses part of the gamma chain. CF(1) is attached to CF(0) by a central stalk formed by the gamma and epsilon chains, while a peripheral stalk is formed by the delta and b chains.

It is found in the cell inner membrane. In terms of biological role, key component of the proton channel; it plays a direct role in the translocation of protons across the membrane. The polypeptide is ATP synthase subunit a (Histophilus somni (strain 129Pt) (Haemophilus somnus)).